The sequence spans 111 residues: Rhodanese domain-containing protein CG4456 (111 aa).

The Rhodanese domain maps to 12–110 (NHPDVYLIDV…SWNEWAQKEG (99 aa)).

The protein is Rhodanese domain-containing protein CG4456 of Drosophila melanogaster (Fruit fly).